The following is a 325-amino-acid chain: UPF0324 membrane protein Bd1437 (325 aa).

The next 8 membrane-spanning stretches (helical) occupy residues 21 to 43, 58 to 80, 87 to 105, 115 to 137, 144 to 166, 211 to 230, 243 to 260, and 302 to 324; these read IAAL…GIVL, YTHH…MVVG, IGYT…MLIG, STLI…APTI, VSVA…PWIG, ARAL…YFRG, PWFI…TWIP, and LQGV…IGWI.

This sequence belongs to the UPF0324 family.

The protein localises to the cell membrane. The chain is UPF0324 membrane protein Bd1437 from Bdellovibrio bacteriovorus (strain ATCC 15356 / DSM 50701 / NCIMB 9529 / HD100).